A 1365-amino-acid chain; its full sequence is DNA-directed RNA polymerase subunit beta' (1365 aa).

4 residues coordinate Zn(2+): Cys-249, Cys-316, Cys-323, and Cys-326.

The protein belongs to the RNA polymerase beta' chain family. RpoC2 subfamily. As to quaternary structure, in cyanobacteria the RNAP catalytic core is composed of 2 alpha, 1 beta, 1 beta', 1 gamma and 1 omega subunit. When a sigma factor is associated with the core the holoenzyme is formed, which can initiate transcription. Requires Zn(2+) as cofactor.

It catalyses the reaction RNA(n) + a ribonucleoside 5'-triphosphate = RNA(n+1) + diphosphate. DNA-dependent RNA polymerase catalyzes the transcription of DNA into RNA using the four ribonucleoside triphosphates as substrates. The chain is DNA-directed RNA polymerase subunit beta' from Synechococcus sp. (strain CC9311).